The chain runs to 647 residues: Threonine--tRNA ligase (647 aa).

The 61-residue stretch at 1–61 (MINITFPDGA…TEDGSIEIVT (61 aa)) folds into the TGS domain. Positions 242-540 (DHRKLGKELD…LIENYKGAFP (299 aa)) are catalytic. Residues Cys336, His387, and His517 each coordinate Zn(2+).

This sequence belongs to the class-II aminoacyl-tRNA synthetase family. In terms of assembly, homodimer. Zn(2+) is required as a cofactor.

The protein resides in the cytoplasm. It carries out the reaction tRNA(Thr) + L-threonine + ATP = L-threonyl-tRNA(Thr) + AMP + diphosphate + H(+). Catalyzes the attachment of threonine to tRNA(Thr) in a two-step reaction: L-threonine is first activated by ATP to form Thr-AMP and then transferred to the acceptor end of tRNA(Thr). Also edits incorrectly charged L-seryl-tRNA(Thr). The chain is Threonine--tRNA ligase from Streptococcus pneumoniae serotype 4 (strain ATCC BAA-334 / TIGR4).